We begin with the raw amino-acid sequence, 336 residues long: tRNA-dihydrouridine(20/20a) synthase (336 aa).

FMN contacts are provided by residues 24–26 and glutamine 77; that span reads PMM. The active-site Proton donor is cysteine 107. FMN-binding positions include lysine 146, histidine 178, 218-220, and 240-241; these read NGG and GR.

It belongs to the Dus family. DusA subfamily. Requires FMN as cofactor.

It catalyses the reaction 5,6-dihydrouridine(20) in tRNA + NADP(+) = uridine(20) in tRNA + NADPH + H(+). The catalysed reaction is 5,6-dihydrouridine(20) in tRNA + NAD(+) = uridine(20) in tRNA + NADH + H(+). It carries out the reaction 5,6-dihydrouridine(20a) in tRNA + NADP(+) = uridine(20a) in tRNA + NADPH + H(+). The enzyme catalyses 5,6-dihydrouridine(20a) in tRNA + NAD(+) = uridine(20a) in tRNA + NADH + H(+). Catalyzes the synthesis of 5,6-dihydrouridine (D), a modified base found in the D-loop of most tRNAs, via the reduction of the C5-C6 double bond in target uridines. Specifically modifies U20 and U20a in tRNAs. The protein is tRNA-dihydrouridine(20/20a) synthase of Pseudomonas putida (strain ATCC 47054 / DSM 6125 / CFBP 8728 / NCIMB 11950 / KT2440).